Here is a 732-residue protein sequence, read N- to C-terminus: MSTPDNHGKKAPQFAAFKPLTTVQNANDCCCDGACSSSPTLSENVSGTRYSWKVSGMDCAACARKVENAVRQLAGVNQVQVLFATEKLVVDADNDIRAQVESAVQKAGYSLRDEQAADEPQASRLKENLPLITLIVMMAISWGLEQFNHPFGQLAFIATTLVGLYPIARQALRLIKSGSYFAIETLMSVAAIGALFIGATAEAAMVLLLFLIGERLEGWAASRARQGVSALMALKPETATRLRNGEREEVAINSLRPGDVIEVAAGGRLPADGKLLSPFASFDESALTGESIPVERATGDKVPAGATSVDRLVTLEVLSEPGASAIDRILKLIEEAEERRAPIERFIDRFSRIYTPAIMAVALLVTLVPPLLFAASWQEWIYKGLTLLLIGCPCALVISTPAAITSGLAAAARRGALIKGGAALEQLGRVTQVAFDKTGTLTVGKPRVTAIHPATGISESELLTLAAAVEQGATHPLAQAIVREAQVAELAIPTAESQRALVGSGIEAQVNGERVLICAAGKHPADAFAGLINELESAGQTVVLVVRNDDVLGIIALQDTLRADAATAISELNALGVKGVILTGDNPRAAAAIAGELGLEFKAGLLPEDKVKAVTKLNQHAPLAMVGDGINDAPAMKAAAIGIAMGSGTDVALETADAALTHNHLRGLVQMIELARATHANIRQNITIALGLKGIFLVTTLLGMTGLWLAVLADTGATVLVTANALRLLRRR.

Residues 1 to 124 (MSTPDNHGKK…QAADEPQASR (124 aa)) are Cytoplasmic-facing. The HMA domain occupies 48–112 (TRYSWKVSGM…AVQKAGYSLR (65 aa)). The Zn(2+) site is built by aspartate 58, cysteine 59, and cysteine 62. A helical membrane pass occupies residues 125–145 (LKENLPLITLIVMMAISWGLE). Position 146 (glutamine 146) is a topological domain, periplasmic. Residues 147-167 (FNHPFGQLAFIATTLVGLYPI) traverse the membrane as a helical segment. At 168–179 (ARQALRLIKSGS) the chain is on the cytoplasmic side. Residues 180-197 (YFAIETLMSVAAIGALFI) traverse the membrane as a helical segment. At 198 to 202 (GATAE) the chain is on the periplasmic side. A helical transmembrane segment spans residues 203–222 (AAMVLLLFLIGERLEGWAAS). Residues 223–356 (RARQGVSALM…IDRFSRIYTP (134 aa)) lie on the Cytoplasmic side of the membrane. The chain crosses the membrane as a helical span at residues 357–377 (AIMAVALLVTLVPPLLFAASW). Topologically, residues 378–383 (QEWIYK) are periplasmic. A helical transmembrane segment spans residues 384 to 404 (GLTLLLIGCPCALVISTPAAI). Residues cysteine 392 and cysteine 394 each contribute to the Zn(2+) site. Topologically, residues 405-685 (TSGLAAAARR…RATHANIRQN (281 aa)) are cytoplasmic. The active-site 4-aspartylphosphate intermediate is aspartate 436. Residues aspartate 436, threonine 438, and aspartate 628 each contribute to the Mg(2+) site. Residues 686–702 (ITIALGLKGIFLVTTLL) form a helical membrane-spanning segment. Over 703 to 707 (GMTGL) the chain is Periplasmic. The chain crosses the membrane as a helical span at residues 708–729 (WLAVLADTGATVLVTANALRLL). Residue aspartate 714 participates in Zn(2+) binding. The Cytoplasmic portion of the chain corresponds to 730–732 (RRR).

Belongs to the cation transport ATPase (P-type) (TC 3.A.3) family. Type IB subfamily.

It is found in the cell inner membrane. It catalyses the reaction Pb(2+)(in) + ATP + H2O = Pb(2+)(out) + ADP + phosphate + H(+). It carries out the reaction Zn(2+)(in) + ATP + H2O = Zn(2+)(out) + ADP + phosphate + H(+). The enzyme catalyses Cd(2+)(in) + ATP + H2O = Cd(2+)(out) + ADP + phosphate + H(+). Its function is as follows. Confers resistance to zinc, cadmium and lead. Couples the hydrolysis of ATP with the export of zinc, cadmium or lead. This chain is Zinc/cadmium/lead-transporting P-type ATPase, found in Shigella sonnei (strain Ss046).